Consider the following 318-residue polypeptide: NADH-ubiquinone oxidoreductase chain 1 (318 aa).

8 helical membrane-spanning segments follow: residues 2–22 (FMIN…FLTL), 69–89 (LMFI…WIPL), 100–120 (LGVL…LWSG), 146–166 (LAII…AMLI), 171–191 (YMWL…STLA), 223–243 (FFLA…ILFF), 253–273 (ELYT…FLWI), and 294–314 (LPLT…TASI).

The protein belongs to the complex I subunit 1 family. Core subunit of respiratory chain NADH dehydrogenase (Complex I) which is composed of 45 different subunits.

The protein resides in the mitochondrion inner membrane. The enzyme catalyses a ubiquinone + NADH + 5 H(+)(in) = a ubiquinol + NAD(+) + 4 H(+)(out). Its function is as follows. Core subunit of the mitochondrial membrane respiratory chain NADH dehydrogenase (Complex I) which catalyzes electron transfer from NADH through the respiratory chain, using ubiquinone as an electron acceptor. Essential for the catalytic activity and assembly of complex I. This is NADH-ubiquinone oxidoreductase chain 1 (MT-ND1) from Felis catus (Cat).